The chain runs to 95 residues: HssA/B-like protein 45 (95 aa).

The segment at 1 to 31 (MTLFSSISSISNPMTSSKSSIASFGSGTSMS) is disordered.

It belongs to the hssA/B family.

In Dictyostelium discoideum (Social amoeba), this protein is HssA/B-like protein 45 (hssl45).